The sequence spans 221 residues: Orotate phosphoribosyltransferase (221 aa).

K26 is a 5-phospho-alpha-D-ribose 1-diphosphate binding site. Residue 34–35 coordinates orotate; it reads FF. Residues 72–73, R99, K100, K103, H105, and 124–132 each bind 5-phospho-alpha-D-ribose 1-diphosphate; these read YK and DDVITAGTA. Orotate is bound by residues T128 and R156.

The protein belongs to the purine/pyrimidine phosphoribosyltransferase family. PyrE subfamily. In terms of assembly, homodimer. Mg(2+) is required as a cofactor.

The catalysed reaction is orotidine 5'-phosphate + diphosphate = orotate + 5-phospho-alpha-D-ribose 1-diphosphate. The protein operates within pyrimidine metabolism; UMP biosynthesis via de novo pathway; UMP from orotate: step 1/2. Catalyzes the transfer of a ribosyl phosphate group from 5-phosphoribose 1-diphosphate to orotate, leading to the formation of orotidine monophosphate (OMP). This chain is Orotate phosphoribosyltransferase, found in Colwellia psychrerythraea (strain 34H / ATCC BAA-681) (Vibrio psychroerythus).